The primary structure comprises 513 residues: Protein disulfide-isomerase (513 aa).

The signal sequence occupies residues 1–25 (MAISKVWISLLLALAVVLSAPAARA). Residues 26-149 (EEAAAAEEAA…IVEYLKKQVG (124 aa)) form the Thioredoxin 1 domain. Catalysis depends on nucleophile residues Cys-67 and Cys-70. Cysteines 67 and 70 form a disulfide. An N-linked (GlcNAc...) asparagine glycan is attached at Asn-282. Residues 369–488 (FRKSEPIPEA…IVDYIRKNKE (120 aa)) form the Thioredoxin 2 domain. Active-site nucleophile residues include Cys-411 and Cys-414. A disulfide bridge links Cys-411 with Cys-414. The segment covering 491-507 (GQAAAATEKAAEPAATE) has biased composition (low complexity). The tract at residues 491–513 (GQAAAATEKAAEPAATEPLKDEL) is disordered. A Prevents secretion from ER motif is present at residues 510 to 513 (KDEL).

Belongs to the protein disulfide isomerase family.

The protein localises to the endoplasmic reticulum lumen. It catalyses the reaction Catalyzes the rearrangement of -S-S- bonds in proteins.. Its function is as follows. Participates in the folding of proteins containing disulfide bonds, may be involved in glycosylation, prolyl hydroxylation and triglyceride transfer. The protein is Protein disulfide-isomerase (PDI) of Hordeum vulgare (Barley).